Here is a 487-residue protein sequence, read N- to C-terminus: Protein nucleotidyltransferase YdiU (487 aa).

G91, G93, R94, K114, D126, G127, R177, and R184 together coordinate ATP. The active-site Proton acceptor is D253. 2 residues coordinate Mg(2+): N254 and D263. D263 provides a ligand contact to ATP.

It belongs to the SELO family. Mg(2+) is required as a cofactor. The cofactor is Mn(2+).

The enzyme catalyses L-seryl-[protein] + ATP = 3-O-(5'-adenylyl)-L-seryl-[protein] + diphosphate. It catalyses the reaction L-threonyl-[protein] + ATP = 3-O-(5'-adenylyl)-L-threonyl-[protein] + diphosphate. The catalysed reaction is L-tyrosyl-[protein] + ATP = O-(5'-adenylyl)-L-tyrosyl-[protein] + diphosphate. It carries out the reaction L-histidyl-[protein] + UTP = N(tele)-(5'-uridylyl)-L-histidyl-[protein] + diphosphate. The enzyme catalyses L-seryl-[protein] + UTP = O-(5'-uridylyl)-L-seryl-[protein] + diphosphate. It catalyses the reaction L-tyrosyl-[protein] + UTP = O-(5'-uridylyl)-L-tyrosyl-[protein] + diphosphate. Nucleotidyltransferase involved in the post-translational modification of proteins. It can catalyze the addition of adenosine monophosphate (AMP) or uridine monophosphate (UMP) to a protein, resulting in modifications known as AMPylation and UMPylation. The protein is Protein nucleotidyltransferase YdiU of Yersinia pestis (strain Pestoides F).